The sequence spans 421 residues: SH2 domain-containing protein 4A (421 aa).

Residues Ser117 and Ser123 each carry the phosphoserine modification. A disordered region spans residues 132–271; that stretch reads DLQAMKKTEP…FLQPLGIPPK (140 aa). Composition is skewed to basic and acidic residues over residues 163–201 and 211–230; these read TRKD…KEDS and KAAD…DYKR. At Ser232 the chain carries Phosphoserine. One can recognise an SH2 domain in the interval 315–407; the sequence is WFHGILTLKK…LGKELLLYPC (93 aa).

In terms of assembly, interacts with ESR1. As to expression, in the kidney, expressed only in the glomerulus. Expressed in T-cells, B-cells, macrophages and dendritic cells (at protein level). In adult, highest levels are found in muscle and lung with lower levels in kidney.

The protein resides in the cytoplasm. Its function is as follows. Inhibits estrogen-induced cell proliferation by competing with PLCG for binding to ESR1, blocking the effect of estrogen on PLCG and repressing estrogen-induced proliferation. May play a role in T-cell development and function. This Mus musculus (Mouse) protein is SH2 domain-containing protein 4A (Sh2d4a).